The sequence spans 299 residues: ATP phosphoribosyltransferase (299 aa).

It belongs to the ATP phosphoribosyltransferase family. Long subfamily. It depends on Mg(2+) as a cofactor.

The protein resides in the cytoplasm. It catalyses the reaction 1-(5-phospho-beta-D-ribosyl)-ATP + diphosphate = 5-phospho-alpha-D-ribose 1-diphosphate + ATP. Its pathway is amino-acid biosynthesis; L-histidine biosynthesis; L-histidine from 5-phospho-alpha-D-ribose 1-diphosphate: step 1/9. Feedback inhibited by histidine. Catalyzes the condensation of ATP and 5-phosphoribose 1-diphosphate to form N'-(5'-phosphoribosyl)-ATP (PR-ATP). Has a crucial role in the pathway because the rate of histidine biosynthesis seems to be controlled primarily by regulation of HisG enzymatic activity. The protein is ATP phosphoribosyltransferase of Actinobacillus pleuropneumoniae serotype 7 (strain AP76).